The chain runs to 95 residues: Ferredoxin-4 (95 aa).

The region spanning 2–95 (DKATLTFTDV…LGGAVKVRPA (94 aa)) is the 2Fe-2S ferredoxin-type domain. [2Fe-2S] cluster contacts are provided by C38, C43, C46, and C81.

Belongs to the 2Fe2S plant-type ferredoxin family. It depends on [2Fe-2S] cluster as a cofactor.

In terms of biological role, ferredoxins are iron-sulfur proteins that transfer electrons in a wide variety of metabolic reactions. This ferredoxin is required for nitrogen fixation. The polypeptide is Ferredoxin-4 (fdxC) (Rhodobacter capsulatus (Rhodopseudomonas capsulata)).